A 424-amino-acid polypeptide reads, in one-letter code: Piriformospora indica-insensitive protein 2 (424 aa).

The N-terminal stretch at 1-21 (MLWQTFFSSLLLLSLLFGCNG) is a signal peptide. 10 LRR repeats span residues 141–166 (ASNL…IGNL), 167–190 (TKLK…ICNL), 191–213 (KRLK…CFKG), 214–237 (LKEL…SFGD), 238–263 (LVSL…GFLK), 265–286 (LTLL…IENI), 287–311 (QSLT…NWGK), 312–336 (MSNL…LTNL), 337–360 (KRLR…KLEA), and 362–387 (PCLG…FYEK).

Its subcellular location is the cell membrane. Its function is as follows. Required for growth promotion and enhanced seed production mediated by the endophytic fungus Piriformospora indica. The polypeptide is Piriformospora indica-insensitive protein 2 (PII-2) (Arabidopsis thaliana (Mouse-ear cress)).